Here is a 360-residue protein sequence, read N- to C-terminus: Insulin gene enhancer protein ISL-2 (360 aa).

LIM zinc-binding domains are found at residues 25 to 86 (AMCV…RLFG) and 87 to 149 (IKCA…LLER). A disordered region spans residues 151-177 (AAGSPRSPGPLPGTPPGLHLPDAGSGQ). Phosphoserine is present on residues Ser154 and Ser157. A DNA-binding region (homeobox) is located at residues 192–251 (TTRVRTVLNEKQLHTLRTCYAANPRPDALMKEQLVEMTGLSPRVIRVWFQNKRCKDKKKS). The tract at residues 273–302 (GTLLVAGSPSAHENAVQGSAVEVQTYQPPW) is LIM-binding domain (LID). Ser280 carries the phosphoserine modification. Over residues 328 to 337 (SGSLGNSSGS) the composition is skewed to low complexity. Residues 328–360 (SGSLGNSSGSDVTSLSSQLPDTPNSMVPSPVET) form a disordered region. The span at 338–360 (DVTSLSSQLPDTPNSMVPSPVET) shows a compositional bias: polar residues.

In terms of assembly, interacts with LHX4.

The protein resides in the nucleus. Functionally, transcriptional factor that defines subclasses of motoneurons that segregate into columns in the spinal cord and select distinct axon pathways. This is Insulin gene enhancer protein ISL-2 (Isl2) from Rattus norvegicus (Rat).